The following is a 205-amino-acid chain: Probable molybdenum cofactor guanylyltransferase (205 aa).

GTP is bound by residues 10–12 (LAG), K22, D69, and D100. D100 serves as a coordination point for Mg(2+).

Belongs to the MobA family. The cofactor is Mg(2+).

It is found in the cytoplasm. The enzyme catalyses Mo-molybdopterin + GTP + H(+) = Mo-molybdopterin guanine dinucleotide + diphosphate. Functionally, transfers a GMP moiety from GTP to Mo-molybdopterin (Mo-MPT) cofactor (Moco or molybdenum cofactor) to form Mo-molybdopterin guanine dinucleotide (Mo-MGD) cofactor. This Natranaerobius thermophilus (strain ATCC BAA-1301 / DSM 18059 / JW/NM-WN-LF) protein is Probable molybdenum cofactor guanylyltransferase.